The chain runs to 411 residues: Adenylosuccinate synthetase (411 aa).

Residues 11-17 (GDEGKGK) and 39-41 (GHT) contribute to the GTP site. The active-site Proton acceptor is the aspartate 12. Mg(2+) contacts are provided by aspartate 12 and glycine 39. Residues 12 to 15 (DEGK), 37 to 40 (NAGH), threonine 121, arginine 135, glutamine 215, threonine 230, and arginine 294 each bind IMP. Residue histidine 40 is the Proton donor of the active site. Position 290–296 (290–296 (TTTKRPR)) interacts with substrate. GTP contacts are provided by residues arginine 296, 322–324 (KLD), and 400–402 (STS).

It belongs to the adenylosuccinate synthetase family. In terms of assembly, homodimer. The cofactor is Mg(2+).

It is found in the cytoplasm. The enzyme catalyses IMP + L-aspartate + GTP = N(6)-(1,2-dicarboxyethyl)-AMP + GDP + phosphate + 2 H(+). It functions in the pathway purine metabolism; AMP biosynthesis via de novo pathway; AMP from IMP: step 1/2. Its function is as follows. Plays an important role in the de novo pathway of purine nucleotide biosynthesis. Catalyzes the first committed step in the biosynthesis of AMP from IMP. In Helicobacter pylori (strain P12), this protein is Adenylosuccinate synthetase.